The following is a 110-amino-acid chain: Insulin (110 aa).

An N-terminal signal peptide occupies residues 1–24; it reads MASLAALLPLLALLVLCRLDPAQA. 3 disulfide bridges follow: Cys31–Cys96, Cys43–Cys109, and Cys95–Cys100. A propeptide spans 57–87 (c peptide); sequence EVEELQVGQAELGGGPGAGGLQPSALELALQ.

It belongs to the insulin family. In terms of assembly, heterodimer of a B chain and an A chain linked by two disulfide bonds.

Its subcellular location is the secreted. Its function is as follows. Insulin decreases blood glucose concentration. It increases cell permeability to monosaccharides, amino acids and fatty acids. It accelerates glycolysis, the pentose phosphate cycle, and glycogen synthesis in liver. The sequence is that of Insulin (INS) from Oryctolagus cuniculus (Rabbit).